A 385-amino-acid polypeptide reads, in one-letter code: S-adenosylmethionine synthase (385 aa).

Residue His16 participates in ATP binding. Asp18 provides a ligand contact to Mg(2+). Glu44 provides a ligand contact to K(+). L-methionine contacts are provided by Glu57 and Gln100. The interval 100–110 is flexible loop; that stretch reads QSPDINQGVDR. Residues 164–166, 230–231, Asp239, 245–246, Ala262, and Lys266 each bind ATP; these read DGK, KF, and RK. Residue Asp239 coordinates L-methionine. L-methionine is bound at residue Lys270.

This sequence belongs to the AdoMet synthase family. In terms of assembly, homotetramer; dimer of dimers. Mg(2+) is required as a cofactor. It depends on K(+) as a cofactor.

The protein localises to the cytoplasm. The enzyme catalyses L-methionine + ATP + H2O = S-adenosyl-L-methionine + phosphate + diphosphate. It functions in the pathway amino-acid biosynthesis; S-adenosyl-L-methionine biosynthesis; S-adenosyl-L-methionine from L-methionine: step 1/1. Its function is as follows. Catalyzes the formation of S-adenosylmethionine (AdoMet) from methionine and ATP. The overall synthetic reaction is composed of two sequential steps, AdoMet formation and the subsequent tripolyphosphate hydrolysis which occurs prior to release of AdoMet from the enzyme. In Helicobacter pylori (strain Shi470), this protein is S-adenosylmethionine synthase.